A 173-amino-acid chain; its full sequence is Photosystem I assembly protein Ycf3 (173 aa).

3 TPR repeats span residues A35–A68, S72–L105, and G120–N153.

The protein belongs to the Ycf3 family.

The protein resides in the cellular thylakoid membrane. In terms of biological role, essential for the assembly of the photosystem I (PSI) complex. May act as a chaperone-like factor to guide the assembly of the PSI subunits. The polypeptide is Photosystem I assembly protein Ycf3 (Gloeothece citriformis (strain PCC 7424) (Cyanothece sp. (strain PCC 7424))).